Here is a 384-residue protein sequence, read N- to C-terminus: MDIADQTFVKKVNQKLLLKEILKNSPISRAKLSEMTGLNKSTVSSQVNTLMKENLVFEIGQGQSSGGRRPVMLVFNKKAGYSIGIDVGVDYISGILTDLEGTIILDQHHHLESNSPEITKDILIDMIHHFITRMPQSPYGLIGIGICVPGLIDKNQKIVFTPNSNWRDIDLKSFIQEKFNVPVFIENEANAGAYGEKVFGAAKNHNNIIYASISTGIGIGVIINNHLYRGVSGFSGEMGHMTIDFNGPKCSCGNRGCWELYASEKALLKSLQTKEKKVSYQDIIDLAHLNDIGTLNALQNFGFYLGIGLTNILNTFNPQAIILRNSIIESHPMVLNSIRSEVSSRVYPQLGNSYELLPSSLGKNAPALGMSSIVIEHFLDIVKM.

The H-T-H motif DNA-binding region spans 29–48 (RAKLSEMTGLNKSTVSSQVN).

Belongs to the ROK (NagC/XylR) family.

In terms of biological role, transcriptional repressor of xylose-utilizing enzymes. The protein is Xylose repressor (xylR) of Bacillus spizizenii (strain ATCC 23059 / NRRL B-14472 / W23) (Bacillus subtilis subsp. spizizenii).